Reading from the N-terminus, the 150-residue chain is Small ribosomal subunit protein uS11z (150 aa).

A Phosphoserine modification is found at Ser-19.

It belongs to the universal ribosomal protein uS11 family. In terms of assembly, interacts with AAK6.

It localises to the cytoplasm. The polypeptide is Small ribosomal subunit protein uS11z (RPS14A) (Arabidopsis thaliana (Mouse-ear cress)).